A 117-amino-acid polypeptide reads, in one-letter code: Cell division protein FtsB (117 aa).

Residues 1–6 (MRDWRW) are Cytoplasmic-facing. The helical transmembrane segment at 7–24 (MLLVLALLLGWLQYRFWF) threads the bilayer. Topologically, residues 25–117 (GPGNSGEVMM…QVGDHPADVP (93 aa)) are periplasmic. Positions 29 to 69 (SGEVMMLEAQVANQERDNEGLQQRNDALAAEVKDLKEGQSA) form a coiled coil.

Belongs to the FtsB family. As to quaternary structure, part of a complex composed of FtsB, FtsL and FtsQ.

It is found in the cell inner membrane. Functionally, essential cell division protein. May link together the upstream cell division proteins, which are predominantly cytoplasmic, with the downstream cell division proteins, which are predominantly periplasmic. In Stenotrophomonas maltophilia (strain K279a), this protein is Cell division protein FtsB.